Here is a 117-residue protein sequence, read N- to C-terminus: Small ribosomal subunit protein bS6 (117 aa).

It belongs to the bacterial ribosomal protein bS6 family.

Binds together with bS18 to 16S ribosomal RNA. The protein is Small ribosomal subunit protein bS6 of Porphyromonas gingivalis (strain ATCC BAA-308 / W83).